The primary structure comprises 78 residues: uncharacterized protein (78 aa).

Transmembrane regions (helical) follow at residues 25-45 and 50-70; these read IITA…DEVV and KCAD…FVFV.

It is found in the membrane. This is an uncharacterized protein from Saccharomyces cerevisiae (strain ATCC 204508 / S288c) (Baker's yeast).